Here is an 89-residue protein sequence, read N- to C-terminus: Small ribosomal subunit protein uS15 (89 aa).

This sequence belongs to the universal ribosomal protein uS15 family. Part of the 30S ribosomal subunit. Forms a bridge to the 50S subunit in the 70S ribosome, contacting the 23S rRNA.

In terms of biological role, one of the primary rRNA binding proteins, it binds directly to 16S rRNA where it helps nucleate assembly of the platform of the 30S subunit by binding and bridging several RNA helices of the 16S rRNA. Its function is as follows. Forms an intersubunit bridge (bridge B4) with the 23S rRNA of the 50S subunit in the ribosome. The polypeptide is Small ribosomal subunit protein uS15 (Chlamydia muridarum (strain MoPn / Nigg)).